Consider the following 332-residue polypeptide: Anthranilate phosphoribosyltransferase (332 aa).

Residues glycine 78, 81–82 (GD), serine 86, 88–91 (NIST), 106–114 (KHGNKSITS), and serine 118 contribute to the 5-phospho-alpha-D-ribose 1-diphosphate site. Glycine 78 contributes to the anthranilate binding site. Serine 90 contacts Mg(2+). Asparagine 109 contributes to the anthranilate binding site. Arginine 163 serves as a coordination point for anthranilate. Mg(2+) contacts are provided by aspartate 222 and glutamate 223.

Belongs to the anthranilate phosphoribosyltransferase family. As to quaternary structure, homodimer. Mg(2+) is required as a cofactor.

The catalysed reaction is N-(5-phospho-beta-D-ribosyl)anthranilate + diphosphate = 5-phospho-alpha-D-ribose 1-diphosphate + anthranilate. Its pathway is amino-acid biosynthesis; L-tryptophan biosynthesis; L-tryptophan from chorismate: step 2/5. Its function is as follows. Catalyzes the transfer of the phosphoribosyl group of 5-phosphorylribose-1-pyrophosphate (PRPP) to anthranilate to yield N-(5'-phosphoribosyl)-anthranilate (PRA). In Staphylococcus aureus (strain Mu3 / ATCC 700698), this protein is Anthranilate phosphoribosyltransferase.